Consider the following 78-residue polypeptide: Putative antitoxin PF1222 (78 aa).

This sequence belongs to the UPF0330 family.

Possibly the antitoxin component of a type II toxin-antitoxin (TA) system. The sequence is that of Putative antitoxin PF1222 from Pyrococcus furiosus (strain ATCC 43587 / DSM 3638 / JCM 8422 / Vc1).